The sequence spans 419 residues: Ribosome biogenesis protein WDR12 homolog (419 aa).

Positions 10–91 (VQVHLKTKQE…EDAIEIEYVE (82 aa)) are ubiquitin-like (UBL) domain. 7 WD repeats span residues 103–141 (LHDD…LTIP), 142–184 (GHTA…NTVE), 191–230 (GHER…AGEG), 249–287 (GHRE…IKAE), 289–328 (STNK…GSVV), 334–374 (GHNA…APLY), and 378–416 (GHGE…VENM).

This sequence belongs to the WD repeat WDR12/YTM1 family.

It localises to the nucleus. Its subcellular location is the nucleolus. The protein localises to the nucleoplasm. Required for maturation of ribosomal RNAs and formation of the large ribosomal subunit. The protein is Ribosome biogenesis protein WDR12 homolog of Drosophila persimilis (Fruit fly).